A 608-amino-acid polypeptide reads, in one-letter code: Glutamine--fructose-6-phosphate aminotransferase [isomerizing] (608 aa).

Catalysis depends on Cys-2, which acts as the Nucleophile; for GATase activity. Residues 2–218 (CGICGIVGHQ…DGDWCELTPD (217 aa)) enclose the Glutamine amidotransferase type-2 domain. SIS domains are found at residues 284–423 (MPFD…ARGT) and 456–598 (MAAV…VDQP). The active-site For Fru-6P isomerization activity is Lys-603.

As to quaternary structure, homodimer.

Its subcellular location is the cytoplasm. It catalyses the reaction D-fructose 6-phosphate + L-glutamine = D-glucosamine 6-phosphate + L-glutamate. Catalyzes the first step in hexosamine metabolism, converting fructose-6P into glucosamine-6P using glutamine as a nitrogen source. The polypeptide is Glutamine--fructose-6-phosphate aminotransferase [isomerizing] (Gluconobacter oxydans (strain 621H) (Gluconobacter suboxydans)).